A 500-amino-acid polypeptide reads, in one-letter code: Ferulic acid decarboxylase 1 (500 aa).

Asparagine 168, histidine 191, and glutamate 233 together coordinate Mn(2+). Residues asparagine 168–arginine 173, glutamine 190–histidine 191, and glutamate 233 contribute to the prenylated FMN site. Glutamate 282 (proton donor) is an active-site residue. A prenylated FMN-binding site is contributed by lysine 391.

Belongs to the UbiD family. UbiD-like/FDC subfamily. Homodimer. May form higher order oligomers. The cofactor is Mn(2+). It depends on prenylated FMN as a cofactor.

The protein localises to the cytoplasm. It catalyses the reaction (E)-4-coumarate + H(+) = 4-vinylphenol + CO2. It carries out the reaction (E)-cinnamate + H(+) = styrene + CO2. The enzyme catalyses (E)-ferulate + H(+) = 2-methoxy-4-vinylphenol + CO2. Functionally, catalyzes the reversible decarboxylation of aromatic carboxylic acids like ferulic acid, p-coumaric acid or cinnamic acid, producing the corresponding vinyl derivatives 4-vinylphenol, 4-vinylguaiacol, and styrene, respectively, which play the role of aroma metabolites. In Aspergillus niger (strain ATCC MYA-4892 / CBS 513.88 / FGSC A1513), this protein is Ferulic acid decarboxylase 1.